The chain runs to 390 residues: Putative cyclin-F2-1 (390 aa).

Residues 135 to 154 (YNGDDDAPAPDDSMASRPQL) form a disordered region.

This sequence belongs to the cyclin family. Cyclin F subfamily.

In Oryza sativa subsp. japonica (Rice), this protein is Putative cyclin-F2-1 (CycF2-1).